The following is a 95-amino-acid chain: Alpha-conotoxin PiXXA (95 aa).

Residues 1–24 (MPKLEMMLLVLLILPLPYFDAAGG) form the signal peptide. Residues 25–45 (QSVHVDGYGDGLARYLQRGER) constitute a propeptide that is removed on maturation. The residue at position 56 (Pro56) is a 4-hydroxyproline. Cystine bridges form between Cys64-Cys73, Cys69-Cys81, Cys74-Cys91, and Cys79-Cys93.

This sequence belongs to the conotoxin D superfamily. As to quaternary structure, homodimer; disulfide-linked. Post-translationally, the homodimer contains 10 disulfide bonds. As to expression, expressed by the venom duct.

Its subcellular location is the secreted. Alpha-conotoxins act on postsynaptic membranes, they bind to the nicotinic acetylcholine receptors (nAChR) and thus inhibit them. Through its two C-terminal domains, this homodimeric protein would bind to two nAChR allosteric sites, located outside the nAChR C-loop of the principal binding face and at the adjacent binding interface in a clockwise direction. This toxin slowly and reversibly inhibits the ACh-induced response of the human alpha-7/CHRNA7 nAChR subtype (IC(50)=6.2 uM). The sequence is that of Alpha-conotoxin PiXXA from Conus princeps (Prince cone).